The chain runs to 420 residues: MTTNLQEMGKQAKQAAFVLAQLSQQQKNQALEIIAQQLEAQSDKILAENQKDIALAKQNGLSDAIIDRLLLTPSRLNDIANDVHHVISLADPVGQLIDGGILDSGLKIERVRVPLGVIGTIYEARPNVTIDVASLCLKTGNAVILRGGKETQYSNKILVDVVQHALVQAGLPKYAIQAITDPDRHLVMELLKLDRYVDMIIPRGGASLHELCKQHSTIPVIVGGIGVCHLFIEQSADLDKALPLIENAKTQRPSTCNTLETLLVQRAIATQFLPKLAQHLSAKHVKFHADPTALAILQSVQADVEPVQAHQLRQEWLSYDLNVVIVDDIEQAIAHIREYGSQHSDGILTGSQRLAQQFVAQVDSAAVYVNASTRFTDGGQFGLGAEVAVSTQKLHARGPMGLEALTTYKWVCVGDYCVRS.

The protein belongs to the gamma-glutamyl phosphate reductase family.

Its subcellular location is the cytoplasm. The enzyme catalyses L-glutamate 5-semialdehyde + phosphate + NADP(+) = L-glutamyl 5-phosphate + NADPH + H(+). It participates in amino-acid biosynthesis; L-proline biosynthesis; L-glutamate 5-semialdehyde from L-glutamate: step 2/2. In terms of biological role, catalyzes the NADPH-dependent reduction of L-glutamate 5-phosphate into L-glutamate 5-semialdehyde and phosphate. The product spontaneously undergoes cyclization to form 1-pyrroline-5-carboxylate. This Pasteurella multocida (strain Pm70) protein is Gamma-glutamyl phosphate reductase.